The chain runs to 807 residues: Glycerol-3-phosphate acyltransferase (807 aa).

The HXXXXD motif motif lies at 308 to 313; sequence CHRSHM.

The protein belongs to the GPAT/DAPAT family.

It is found in the cell inner membrane. It carries out the reaction sn-glycerol 3-phosphate + an acyl-CoA = a 1-acyl-sn-glycero-3-phosphate + CoA. It functions in the pathway phospholipid metabolism; CDP-diacylglycerol biosynthesis; CDP-diacylglycerol from sn-glycerol 3-phosphate: step 1/3. In Shewanella frigidimarina (strain NCIMB 400), this protein is Glycerol-3-phosphate acyltransferase.